The primary structure comprises 827 residues: Lon protease (827 aa).

Residues 1-27 (MNDETLREQTTAESEETSPTTPSPEPE) form a disordered region. Positions 32 to 225 (LPLIPLEGAV…KVLMFYRKQF (194 aa)) constitute a Lon N-terminal domain. ATP is bound at residue 385 to 392 (GPPGVGKT). The Lon proteolytic domain maps to 625-806 (IDQPGVAIGL…DEVLSIALLP (182 aa)). Active-site residues include Ser-712 and Lys-755.

Belongs to the peptidase S16 family. As to quaternary structure, homohexamer. Organized in a ring with a central cavity.

Its subcellular location is the cytoplasm. It catalyses the reaction Hydrolysis of proteins in presence of ATP.. In terms of biological role, ATP-dependent serine protease that mediates the selective degradation of mutant and abnormal proteins as well as certain short-lived regulatory proteins. Required for cellular homeostasis and for survival from DNA damage and developmental changes induced by stress. Degrades polypeptides processively to yield small peptide fragments that are 5 to 10 amino acids long. Binds to DNA in a double-stranded, site-specific manner. In Chloroflexus aurantiacus (strain ATCC 29366 / DSM 635 / J-10-fl), this protein is Lon protease.